The chain runs to 411 residues: L-cysteine:1D-myo-inositol 2-amino-2-deoxy-alpha-D-glucopyranoside ligase (411 aa).

Zn(2+) is bound at residue C43. L-cysteinyl-5'-AMP-binding positions include 43-46 (CGIT), T58, and 81-83 (NVT). Residues 45–55 (ITPYDATHLGH) carry the 'HIGH' region motif. Positions 186 to 191 (QRGGDP) match the 'ERGGDP' region motif. L-cysteinyl-5'-AMP is bound at residue W226. A Zn(2+)-binding site is contributed by C230. 248-250 (GSD) contributes to the L-cysteinyl-5'-AMP binding site. H255 lines the Zn(2+) pocket. L-cysteinyl-5'-AMP is bound at residue I282. The 'KMSKS' region motif lies at 288–292 (KMSKS).

It belongs to the class-I aminoacyl-tRNA synthetase family. MshC subfamily. Monomer. Zn(2+) is required as a cofactor.

It catalyses the reaction 1D-myo-inositol 2-amino-2-deoxy-alpha-D-glucopyranoside + L-cysteine + ATP = 1D-myo-inositol 2-(L-cysteinylamino)-2-deoxy-alpha-D-glucopyranoside + AMP + diphosphate + H(+). Catalyzes the ATP-dependent condensation of GlcN-Ins and L-cysteine to form L-Cys-GlcN-Ins. In Mycobacterium marinum (strain ATCC BAA-535 / M), this protein is L-cysteine:1D-myo-inositol 2-amino-2-deoxy-alpha-D-glucopyranoside ligase.